Consider the following 131-residue polypeptide: ATP synthase epsilon chain, chloroplastic (131 aa).

It belongs to the ATPase epsilon chain family. F-type ATPases have 2 components, CF(1) - the catalytic core - and CF(0) - the membrane proton channel. CF(1) has five subunits: alpha(3), beta(3), gamma(1), delta(1), epsilon(1). CF(0) has three main subunits: a, b and c.

Its subcellular location is the plastid. It localises to the chloroplast thylakoid membrane. Functionally, produces ATP from ADP in the presence of a proton gradient across the membrane. This is ATP synthase epsilon chain, chloroplastic from Guillardia theta (Cryptophyte).